Reading from the N-terminus, the 315-residue chain is Aspartate carbamoyltransferase catalytic subunit (315 aa).

Carbamoyl phosphate is bound by residues Arg64 and Thr65. Residue Lys92 coordinates L-aspartate. Residues Arg114, His142, and Gln145 each coordinate carbamoyl phosphate. Residues Arg175 and Arg229 each contribute to the L-aspartate site. Gly270 and Pro271 together coordinate carbamoyl phosphate.

Belongs to the aspartate/ornithine carbamoyltransferase superfamily. ATCase family. In terms of assembly, heterododecamer (2C3:3R2) of six catalytic PyrB chains organized as two trimers (C3), and six regulatory PyrI chains organized as three dimers (R2).

The catalysed reaction is carbamoyl phosphate + L-aspartate = N-carbamoyl-L-aspartate + phosphate + H(+). It participates in pyrimidine metabolism; UMP biosynthesis via de novo pathway; (S)-dihydroorotate from bicarbonate: step 2/3. Catalyzes the condensation of carbamoyl phosphate and aspartate to form carbamoyl aspartate and inorganic phosphate, the committed step in the de novo pyrimidine nucleotide biosynthesis pathway. This is Aspartate carbamoyltransferase catalytic subunit from Xanthobacter autotrophicus (strain ATCC BAA-1158 / Py2).